Here is a 306-residue protein sequence, read N- to C-terminus: Agmatinase (306 aa).

6 residues coordinate Mn(2+): histidine 126, aspartate 149, histidine 151, aspartate 153, aspartate 230, and aspartate 232.

It belongs to the arginase family. Agmatinase subfamily. Mn(2+) is required as a cofactor.

The catalysed reaction is agmatine + H2O = urea + putrescine. It functions in the pathway amine and polyamine biosynthesis; putrescine biosynthesis via agmatine pathway; putrescine from agmatine: step 1/1. Functionally, catalyzes the formation of putrescine from agmatine. In Shigella sonnei (strain Ss046), this protein is Agmatinase.